We begin with the raw amino-acid sequence, 217 residues long: Ras-related protein RIC2 (217 aa).

GTP is bound by residues 21 to 28 (GDSGVGKS), 69 to 73 (DTAGQ), and 127 to 130 (NKSD). Residues Cys-214 and Cys-215 are each lipidated (S-geranylgeranyl cysteine).

It belongs to the small GTPase superfamily. Rab family.

The protein resides in the cell membrane. Its function is as follows. Possesses GTPase activity. This chain is Ras-related protein RIC2 (RIC2), found in Oryza sativa subsp. japonica (Rice).